The sequence spans 1147 residues: ATP-dependent helicase/deoxyribonuclease subunit B (1147 aa).

8–15 contributes to the ATP binding site; that stretch reads GGSGAGKS. [4Fe-4S] cluster is bound by residues Cys780, Cys1092, Cys1095, and Cys1101.

It belongs to the helicase family. AddB/RexB type 1 subfamily. Heterodimer of AddA and AddB. Requires Mg(2+) as cofactor. The cofactor is [4Fe-4S] cluster.

In terms of biological role, the heterodimer acts as both an ATP-dependent DNA helicase and an ATP-dependent, dual-direction single-stranded exonuclease. Recognizes the chi site generating a DNA molecule suitable for the initiation of homologous recombination. The AddB subunit has 5' -&gt; 3' nuclease activity but not helicase activity. This is ATP-dependent helicase/deoxyribonuclease subunit B from Lachnoclostridium phytofermentans (strain ATCC 700394 / DSM 18823 / ISDg) (Clostridium phytofermentans).